A 206-amino-acid polypeptide reads, in one-letter code: Outer-membrane lipoprotein carrier protein (206 aa).

A signal peptide spans 1–20 (MRLIRMLLPVLALTTLTAHA).

It belongs to the LolA family. Monomer.

It localises to the periplasm. In terms of biological role, participates in the translocation of lipoproteins from the inner membrane to the outer membrane. Only forms a complex with a lipoprotein if the residue after the N-terminal Cys is not an aspartate (The Asp acts as a targeting signal to indicate that the lipoprotein should stay in the inner membrane). The chain is Outer-membrane lipoprotein carrier protein from Pseudomonas fluorescens (strain Pf0-1).